The sequence spans 320 residues: Cytochrome f (320 aa).

Positions 1–35 (MQTRNAFSWLKKQITRSISVSLMIYILTRTSISSA) are cleaved as a signal peptide. Residues Tyr-36, Cys-56, Cys-59, and His-60 each contribute to the heme site. The chain crosses the membrane as a helical span at residues 286-306 (VQGLLFFLASVILAQIFLVLK).

It belongs to the cytochrome f family. As to quaternary structure, the 4 large subunits of the cytochrome b6-f complex are cytochrome b6, subunit IV (17 kDa polypeptide, petD), cytochrome f and the Rieske protein, while the 4 small subunits are PetG, PetL, PetM and PetN. The complex functions as a dimer. It depends on heme as a cofactor.

It localises to the plastid. The protein localises to the chloroplast thylakoid membrane. In terms of biological role, component of the cytochrome b6-f complex, which mediates electron transfer between photosystem II (PSII) and photosystem I (PSI), cyclic electron flow around PSI, and state transitions. The polypeptide is Cytochrome f (Solanum bulbocastanum (Wild potato)).